A 467-amino-acid polypeptide reads, in one-letter code: Asparagine--tRNA ligase (467 aa).

This sequence belongs to the class-II aminoacyl-tRNA synthetase family. Homodimer.

The protein resides in the cytoplasm. It carries out the reaction tRNA(Asn) + L-asparagine + ATP = L-asparaginyl-tRNA(Asn) + AMP + diphosphate + H(+). In Glaesserella parasuis serovar 5 (strain SH0165) (Haemophilus parasuis), this protein is Asparagine--tRNA ligase.